We begin with the raw amino-acid sequence, 401 residues long: Deubiquitinase and deneddylase Dub1 (401 aa).

The segment covering 1-11 has biased composition (polar residues); the sequence is MLSPTNSTSKT. The tract at residues 1–24 is disordered; sequence MLSPTNSTSKTAPVPPRDSSKPVL. The chain crosses the membrane as a helical span at residues 40 to 60; the sequence is TALAVLLVVVTLGLILLFYSF. A disordered region spans residues 77-130; sequence KEQPTISIPVPLPSPPLAVPRPSTPPPPVISRPSTPSAPKPSTPPPLLPKAPKP. Over residues 86–128 the composition is skewed to pro residues; that stretch reads VPLPSPPLAVPRPSTPPPPVISRPSTPSAPKPSTPPPLLPKAP. Active-site residues include H275, D292, and C345.

Belongs to the peptidase C48 family. Binds to host NFKBIA.

The protein localises to the secreted. It localises to the host cell. Its subcellular location is the membrane. Its function is as follows. Effector proteins function to alter host cell physiology and promote bacterial survival in host tissues. This protease possesses deubiquitinating and deneddylating activities. Impairs ubiquitination and degradation of NF-kappa-B inhibitor alpha (NFKBIA), thereby preventing NF-kappa-B activation. In Chlamydia trachomatis serovar L2 (strain ATCC VR-902B / DSM 19102 / 434/Bu), this protein is Deubiquitinase and deneddylase Dub1 (cdu1).